Reading from the N-terminus, the 692-residue chain is ATP-dependent DNA helicase DinG (692 aa).

The Helicase ATP-binding domain maps to 16-293 (NLGNQLDNFI…AELAEYKKAA (278 aa)). ATP is bound at residue 56–63 (AGTGIGKS). Cys-123 contributes to the [4Fe-4S] cluster binding site. A DEAH box motif is present at residues 134–137 (NNDQ). Positions 192 and 202 each coordinate [4Fe-4S] cluster. The short motif at 247–250 (DEAH) is the DEAH box element. Residues 514–692 (LIKTLPEYLE…PPFKRVIEYS (179 aa)) enclose the Helicase C-terminal domain.

It belongs to the helicase family. DinG subfamily. Type 1 sub-subfamily. It depends on [4Fe-4S] cluster as a cofactor.

It catalyses the reaction Couples ATP hydrolysis with the unwinding of duplex DNA at the replication fork by translocating in the 5'-3' direction. This creates two antiparallel DNA single strands (ssDNA). The leading ssDNA polymer is the template for DNA polymerase III holoenzyme which synthesizes a continuous strand.. The catalysed reaction is ATP + H2O = ADP + phosphate + H(+). Functionally, DNA-dependent ATPase and 5'-3' DNA helicase. Unwinds D-loops, R-loops, forked DNA and G-quadruplex DNA. This is ATP-dependent DNA helicase DinG from Photobacterium profundum (strain SS9).